The following is a 386-amino-acid chain: DNA replication and repair protein RecF (386 aa).

30-37 contributes to the ATP binding site; sequence GSNGFGKT.

The protein belongs to the RecF family.

It is found in the cytoplasm. Functionally, the RecF protein is involved in DNA metabolism; it is required for DNA replication and normal SOS inducibility. RecF binds preferentially to single-stranded, linear DNA. It also seems to bind ATP. The polypeptide is DNA replication and repair protein RecF (Mycolicibacterium vanbaalenii (strain DSM 7251 / JCM 13017 / BCRC 16820 / KCTC 9966 / NRRL B-24157 / PYR-1) (Mycobacterium vanbaalenii)).